A 174-amino-acid polypeptide reads, in one-letter code: Pectinesterase inhibitor 12 (174 aa).

An N-terminal signal peptide occupies residues 1-20 (MKFLVSLVIFSLFLNGFATA). 2 disulfides stabilise this stretch: cysteine 28–cysteine 43 and cysteine 100–cysteine 140. N-linked (GlcNAc...) asparagine glycosylation occurs at asparagine 129.

This sequence belongs to the PMEI family.

The protein localises to the secreted. The protein resides in the extracellular space. It is found in the apoplast. Its function is as follows. Pectin methylesterase (PME) inhibitor involved in the maintenance of cell wall integrity in response to necrotrophic pathogens. Modulates PME activity and pectin methylesterification during infection by Botrytis cinerea and contributes to resistance against the pathogen. The sequence is that of Pectinesterase inhibitor 12 from Arabidopsis thaliana (Mouse-ear cress).